A 251-amino-acid polypeptide reads, in one-letter code: Regulator of G-protein signaling 9-binding protein C (251 aa).

The Cytoplasmic segment spans residues 1–230 (MPLQNVKVAD…NSKGCCSDGQ (230 aa)). Coiled coils occupy residues 53–94 (LRDE…ELER) and 158–187 (ANKA…MKVN). Residues 231–250 (LIVSLLLCGTALVAITLYSI) traverse the membrane as a helical; Anchor for type IV membrane protein segment. Position 251 (Leu251) is a topological domain, extracellular.

This sequence belongs to the RGS7BP/RGS9BP family.

The protein localises to the membrane. Its function is as follows. Regulator of G protein-coupled receptor (GPCR) signaling. Probably acts by regulating the activity of some 'R7' family protein (RGS6, RGS7, RGS9 and/or RGS11). This Xenopus laevis (African clawed frog) protein is Regulator of G-protein signaling 9-binding protein C (rgs9bp-c).